A 941-amino-acid chain; its full sequence is Peroxisomal ATPase PEX6 (941 aa).

Residues 384 to 391 and 698 to 705 each bind ATP; these read GIPGCGKR and GPPGTGKT.

Belongs to the AAA ATPase family. Interacts with PEX1; forming the PEX1-PEX6 AAA ATPase complex, which is composed of a heterohexamer formed by a trimer of PEX1-PEX6 dimers. Interacts with APME9.

The protein resides in the cytoplasm. The protein localises to the cytosol. It is found in the peroxisome membrane. It carries out the reaction ATP + H2O = ADP + phosphate + H(+). Component of the PEX1-PEX6 AAA ATPase complex, a protein dislocase complex that mediates the ATP-dependent extraction of the PEX5 receptor from peroxisomal membranes, an essential step for PEX5 recycling. Specifically recognizes PEX5 monoubiquitinated at 'Cys-11', and pulls it out of the peroxisome lumen through the PEX2-PEX10-PEX12 retrotranslocation channel. Extraction by the PEX1-PEX6 AAA ATPase complex is accompanied by unfolding of the TPR repeats and release of bound cargo from PEX5. Required for jasmonate biosynthesis. Necessary for the developmental elimination of obsolete peroxisome matix proteins. The chain is Peroxisomal ATPase PEX6 from Arabidopsis thaliana (Mouse-ear cress).